The sequence spans 215 residues: MDFKSRKYKIKKHPKDCKLHAKKYRGTLNSKGKNDNDCLIMCMRCRKVKGIDSYSKTQWSKTFTFVRGRTVSVSDPKVICRTCQPKQHDSIWCTACQQTKGINEFSKAQRHVLDPRCQICVHSQRNDGDDNLESDKFVDPFIGDDSDLDDDIYIHDKQTINSEYADDVSDNTDEERTESKGQQESNSAEEYDDDDSDEDRMEEIFQQFKKEKQIV.

Positions 159-202 (TINSEYADDVSDNTDEERTESKGQQESNSAEEYDDDDSDEDRME) are disordered. 2 stretches are compositionally biased toward acidic residues: residues 164–176 (YADDVSDNTDEER) and 187–201 (SAEEYDDDDSDEDRM).

Its subcellular location is the nucleus. The protein resides in the nucleolus. Its function is as follows. Required for meiotic chromosome segregation. The protein is Meiotic chromosome segregation protein P8B7.28c of Schizosaccharomyces pombe (strain 972 / ATCC 24843) (Fission yeast).